The following is a 343-amino-acid chain: Cytoplasmic tRNA 2-thiolation protein 1 (343 aa).

It belongs to the TtcA family. CTU1/NCS6/ATPBD3 subfamily.

It is found in the cytoplasm. It functions in the pathway tRNA modification; 5-methoxycarbonylmethyl-2-thiouridine-tRNA biosynthesis. Functionally, plays a central role in 2-thiolation of mcm(5)S(2)U at tRNA wobble positions of tRNA(Lys), tRNA(Glu) and tRNA(Gln). Directly binds tRNAs and probably acts by catalyzing adenylation of tRNAs, an intermediate required for 2-thiolation. It is unclear whether it acts as a sulfurtransferase that transfers sulfur from thiocarboxylated URM1 onto the uridine of tRNAs at wobble position. The sequence is that of Cytoplasmic tRNA 2-thiolation protein 1 from Drosophila melanogaster (Fruit fly).